A 68-amino-acid polypeptide reads, in one-letter code: MEIECPICDDGKLHEVEVLEEKKGKFKRRNAEFDAEVYIVVCKDCGTKGIVRRVRQINMESYEFPLED.

This is an uncharacterized protein from Archaeoglobus fulgidus (strain ATCC 49558 / DSM 4304 / JCM 9628 / NBRC 100126 / VC-16).